A 53-amino-acid polypeptide reads, in one-letter code: Small polypeptide DEVIL 7 (53 aa).

The span at 1–16 shows a compositional bias: basic and acidic residues; it reads MREKYTKEEAVKNWEK. Positions 1–28 are disordered; the sequence is MREKYTKEEAVKNWEKKKNKPSSPKGVG. Residues 22–53 are required for DVL/RTFL small polypeptide activity; sequence SSPKGVGEFLKKKKGRFYIIGKCITMLLCSHK. A helical membrane pass occupies residues 30 to 46; sequence FLKKKKGRFYIIGKCIT.

It belongs to the DVL/RTFL small polypeptides family.

The protein resides in the cell membrane. Functionally, small polypeptide acting as a regulatory molecule which coordinates cellular responses required for differentiation, growth and development, probably by restricting polar cell proliferation in lateral organs and coordinating socket cell recruitment and differentiation at trichome sites. The sequence is that of Small polypeptide DEVIL 7 from Arabidopsis thaliana (Mouse-ear cress).